The following is a 550-amino-acid chain: MTKFVFVTGGVVSSLGKGIAAASLAAILESRGLKVTLLKLDPYINVDPGTMSPFQHGEVFVTEDGAETDLDLGHYERFVSAKMRKSNNFTTGQIYESVIRKERRGEYLGKTVQVIPHITNEIQAFVERGAAASHDGKADVALVEIGGTVGDIESLPFLEAARQMSLRMGRNHCAFVHLTLVPFIASAGELKTKPTQHSVQKLREIGISPTALLCRADRPIPDDERAKISLFANIPQDAVISVWDADSIYKIPQMLNEQGLDRLICEELRLDPKPADLSMWQKLVNAQENPEHEITIGMVGKYVDLTESYKSLIEALRHAGMHTATRVNIEYIDSEELESGHLEVLAPLDAILVPGGFGKRGTEGKIRAIQYARENKIPYLGICLGMQLAVIEFARHLAGMTDANSTEFNLETEHPVVALITEWVDREGKVEQRSADSDLGGTMRLGAQRVPVKEGTKAATIYGAEVNERHRHRYEVNNHYVPTLEKAGMVISARTPTENLPEMMELPESMHPWFVGVQFHPEFTSTPRDGHPLFKAYVEAALASQQRKGA.

Residues 1–270 (MTKFVFVTGG…DRLICEELRL (270 aa)) are amidoligase domain. Ser13 contacts CTP. UTP is bound at residue Ser13. ATP is bound by residues 14–19 (SLGKGI) and Asp71. Residues Asp71 and Glu144 each coordinate Mg(2+). CTP is bound by residues 151-153 (DIE), 191-196 (KTKPTQ), and Lys227. UTP contacts are provided by residues 191 to 196 (KTKPTQ) and Lys227. Positions 295 to 547 (TIGMVGKYVD…VEAALASQQR (253 aa)) constitute a Glutamine amidotransferase type-1 domain. Gly356 lines the L-glutamine pocket. Catalysis depends on Cys383, which acts as the Nucleophile; for glutamine hydrolysis. Residues 384-387 (LGMQ), Glu407, and Arg473 contribute to the L-glutamine site. Residues His520 and Glu522 contribute to the active site.

Belongs to the CTP synthase family. In terms of assembly, homotetramer.

The catalysed reaction is UTP + L-glutamine + ATP + H2O = CTP + L-glutamate + ADP + phosphate + 2 H(+). It carries out the reaction L-glutamine + H2O = L-glutamate + NH4(+). The enzyme catalyses UTP + NH4(+) + ATP = CTP + ADP + phosphate + 2 H(+). Its pathway is pyrimidine metabolism; CTP biosynthesis via de novo pathway; CTP from UDP: step 2/2. Allosterically activated by GTP, when glutamine is the substrate; GTP has no effect on the reaction when ammonia is the substrate. The allosteric effector GTP functions by stabilizing the protein conformation that binds the tetrahedral intermediate(s) formed during glutamine hydrolysis. Inhibited by the product CTP, via allosteric rather than competitive inhibition. Catalyzes the ATP-dependent amination of UTP to CTP with either L-glutamine or ammonia as the source of nitrogen. Regulates intracellular CTP levels through interactions with the four ribonucleotide triphosphates. This is CTP synthase from Cupriavidus necator (strain ATCC 17699 / DSM 428 / KCTC 22496 / NCIMB 10442 / H16 / Stanier 337) (Ralstonia eutropha).